The primary structure comprises 568 residues: Phosphoprotein (568 aa).

A disordered region spans residues 1-25 (MDQDAFFSERDPEAEGETPRKQESL). Residues 7-24 (FSERDPEAEGETPRKQES) are compositionally biased toward basic and acidic residues. The tract at residues 33 to 41 (DVVLSYKPT) is N0 binding. Positions 55–322 (DNSKENKPSC…TTANEEGTSN (268 aa)) are disordered. Composition is skewed to basic and acidic residues over residues 56–105 (NSKE…HARI), 132–144 (RNTR…PNER), 151–167 (PTDE…KREE), and 175–190 (EEVR…REGR). The span at 191–216 (TNNNGRSMETSSTHSTRITDVITNPS) shows a compositional bias: polar residues. Positions 239 to 265 (TRSERTQNSELHKSTSEDSSNLEDHNT) are enriched in basic and acidic residues. Positions 294–304 (YTTNNANNNTK) are enriched in low complexity. The tract at residues 344–411 (FELSRSASHV…SSRDLHKRFS (68 aa)) is multimerization. The stretch at 387–416 (EENRTLLKQIQEEIDSSRDLHKRFSEYQKE) forms a coiled coil. Residues 412–445 (EYQKEQNSLMMANLSTLHIITDRGGKTGDPSDTT) form a l protein binding region. Disordered stretches follow at residues 434-455 (RGGK…TKGK) and 494-513 (VLEE…LIPS). Polar residues predominate over residues 441 to 450 (PSDTTRSPSV). The interval 479–568 (DLIREDELRD…FEEDIDSLTN (90 aa)) is interaction with the nucleocapsid (N-RNA).

The protein belongs to the respirovirus P protein family. Homotetramer. Interacts (via multimerization domain) with polymerase L; this interaction forms the polymerase complex. Interacts (via N-terminus) with N0; this interaction allows P to chaperon N0 before encapsidation and form the N-P complex. Interacts (via C-terminus) with N-RNA template; this interaction positions the polymerase on the template.

Functionally, essential cofactor of the RNA polymerase L that plays a central role in the transcription and replication by forming the polymerase complex with RNA polymerase L and recruiting L to the genomic N-RNA template for RNA synthesis. Also plays a central role in the encapsidation of nascent RNA chains by forming the encapsidation complex with the nucleocapsid protein N (N-P complex). Acts as a chaperone for newly synthesized free N protein, so-called N0, allowing encapsidation of nascent RNA chains during replication. The nucleoprotein protein N prevents excessive phosphorylation of P, which leads to down-regulation of viral transcription/ replication. Participates, together with N, in the formation of viral factories (viroplasms), which are large inclusions in the host cytoplasm where replication takes place. Recruits host PI4KB and remodel the host endoplasmic reticulum membrane to form viral replication factories. The sequence is that of Phosphoprotein (P/C) from Human parainfluenza 1 virus (strain CI-5/73) (HPIV-1).